The sequence spans 221 residues: Ribonuclease T (221 aa).

An Exonuclease domain is found at 20-194 (VVIDVETAGF…YDTERTAELF (175 aa)). Residues Asp23, Glu25, His181, and Asp186 each coordinate Mg(2+). The active-site Proton donor/acceptor is the His181.

It belongs to the RNase T family. As to quaternary structure, homodimer. Mg(2+) serves as cofactor.

In terms of biological role, trims short 3' overhangs of a variety of RNA species, leaving a one or two nucleotide 3' overhang. Responsible for the end-turnover of tRNA: specifically removes the terminal AMP residue from uncharged tRNA (tRNA-C-C-A). Also appears to be involved in tRNA biosynthesis. The chain is Ribonuclease T from Shewanella frigidimarina (strain NCIMB 400).